A 262-amino-acid polypeptide reads, in one-letter code: MSTALEARKAGFATGGATLVHNVDLAVAQGELIAIVGPNGAGKSTLLRMLSGDLRPTSGSVRLGDRELSSYSPRELADRRAVLAQHINVSFPFTVEEIVRMGTGDVGHRKAGALIDAALHEVGLGEFRSRDITTLSGGEQQRAHFARVLVQLWSSEAVRGPGILLLDEPTSSLDIRHQLDLAHTARRCARNGATVIAILHDLNLATRFAERIVVMHRGAVAADGPPSTVMRPELIGAVFDVELTVQMDASGSPFVLPELTRA.

The ABC transporter domain occupies 5-242 (LEARKAGFAT…ELIGAVFDVE (238 aa)). Position 37-44 (37-44 (GPNGAGKS)) interacts with ATP.

It belongs to the ABC transporter superfamily. Heme (hemin) importer (TC 3.A.1.14.5) family. In terms of assembly, the complex is composed of two ATP-binding proteins (HmuV), two transmembrane proteins (HmuU) and a solute-binding protein (HmuT).

It localises to the cell inner membrane. Functionally, part of the ABC transporter complex HmuTUV involved in hemin import. Responsible for energy coupling to the transport system. The chain is Hemin import ATP-binding protein HmuV from Rhodopseudomonas palustris (strain HaA2).